The primary structure comprises 119 residues: Large ribosomal subunit protein uL24 (119 aa).

Belongs to the universal ribosomal protein uL24 family. In terms of assembly, part of the 50S ribosomal subunit.

Functionally, one of two assembly initiator proteins, it binds directly to the 5'-end of the 23S rRNA, where it nucleates assembly of the 50S subunit. Its function is as follows. One of the proteins that surrounds the polypeptide exit tunnel on the outside of the subunit. This is Large ribosomal subunit protein uL24 from Leifsonia xyli subsp. xyli (strain CTCB07).